The chain runs to 224 residues: Large ribosomal subunit protein uL4 (224 aa).

Positions 52-109 (AAARQGTHSTKTRGDVSGGGRKPYRQKGTGRARQGSTRTPQFTGGGVVHGPKPRDYSQ) are disordered.

This sequence belongs to the universal ribosomal protein uL4 family. In terms of assembly, part of the 50S ribosomal subunit.

Its function is as follows. One of the primary rRNA binding proteins, this protein initially binds near the 5'-end of the 23S rRNA. It is important during the early stages of 50S assembly. It makes multiple contacts with different domains of the 23S rRNA in the assembled 50S subunit and ribosome. Forms part of the polypeptide exit tunnel. In Mycobacterium ulcerans (strain Agy99), this protein is Large ribosomal subunit protein uL4.